Reading from the N-terminus, the 753-residue chain is Fatty acid oxidation complex subunit alpha (753 aa).

Residues 8 to 197 (SVTHPAFTLN…KMGLVDDVVP (190 aa)) form an enoyl-CoA hydratase region. A 3-hydroxyacyl-CoA dehydrogenase region spans residues 313–747 (RAIHRVGVLG…FYPVDANIDE (435 aa)). Residues 593-622 (SNPTLHSNSTKNSSPTKNGNSPAKRNSFKW) form a disordered region. A compositionally biased stretch (low complexity) spans 599–614 (SNSTKNSSPTKNGNSP).

It in the N-terminal section; belongs to the enoyl-CoA hydratase/isomerase family. In the central section; belongs to the 3-hydroxyacyl-CoA dehydrogenase family. As to quaternary structure, heterotetramer of two alpha chains (FadJ) and two beta chains (FadI).

It is found in the cytoplasm. The enzyme catalyses a (3S)-3-hydroxyacyl-CoA = a (2E)-enoyl-CoA + H2O. It carries out the reaction a 4-saturated-(3S)-3-hydroxyacyl-CoA = a (3E)-enoyl-CoA + H2O. The catalysed reaction is a (3S)-3-hydroxyacyl-CoA + NAD(+) = a 3-oxoacyl-CoA + NADH + H(+). It catalyses the reaction (3S)-3-hydroxybutanoyl-CoA = (3R)-3-hydroxybutanoyl-CoA. It participates in lipid metabolism; fatty acid beta-oxidation. Catalyzes the formation of a hydroxyacyl-CoA by addition of water on enoyl-CoA. Also exhibits 3-hydroxyacyl-CoA epimerase and 3-hydroxyacyl-CoA dehydrogenase activities. In Yersinia pseudotuberculosis serotype I (strain IP32953), this protein is Fatty acid oxidation complex subunit alpha.